The chain runs to 366 residues: tRNA/tmRNA (uracil-C(5))-methyltransferase (366 aa).

S-adenosyl-L-methionine contacts are provided by glutamine 190, tyrosine 218, asparagine 223, glutamate 239, and aspartate 299. The active-site Nucleophile is cysteine 324. Glutamate 358 functions as the Proton acceptor in the catalytic mechanism.

Belongs to the class I-like SAM-binding methyltransferase superfamily. RNA M5U methyltransferase family. TrmA subfamily.

It catalyses the reaction uridine(54) in tRNA + S-adenosyl-L-methionine = 5-methyluridine(54) in tRNA + S-adenosyl-L-homocysteine + H(+). It carries out the reaction uridine(341) in tmRNA + S-adenosyl-L-methionine = 5-methyluridine(341) in tmRNA + S-adenosyl-L-homocysteine + H(+). Its function is as follows. Dual-specificity methyltransferase that catalyzes the formation of 5-methyluridine at position 54 (m5U54) in all tRNAs, and that of position 341 (m5U341) in tmRNA (transfer-mRNA). The chain is tRNA/tmRNA (uracil-C(5))-methyltransferase from Escherichia coli O81 (strain ED1a).